The sequence spans 447 residues: Alpha-1,6-mannosyl-glycoprotein 2-beta-N-acetylglucosaminyltransferase (447 aa).

Residues 1–9 (MRFRIYKRK) are Cytoplasmic-facing. The helical; Signal-anchor for type II membrane protein transmembrane segment at 10-29 (VLILTLVVAACGFVLWSSNG) threads the bilayer. The Lumenal segment spans residues 30–447 (RQRKNEALAP…ELCKSYRRLQ (418 aa)). Asparagine 69 and asparagine 86 each carry an N-linked (GlcNAc...) asparagine glycan. Residues 123–127 (QVHNR) and aspartate 154 each bind substrate. Cysteine 196 and cysteine 210 form a disulfide bridge. Position 229 to 233 (229 to 233 (QTKHH)) interacts with substrate. Position 261 (aspartate 261) interacts with Mn(2+). A disulfide bridge connects residues cysteine 283 and cysteine 286. Arginine 298 is a binding site for substrate. Disulfide bonds link cysteine 334–cysteine 357, cysteine 339–cysteine 440, and cysteine 378–cysteine 386. Histidine 374 is a Mn(2+) binding site.

This sequence belongs to the glycosyltransferase 16 (GT16) protein family. In terms of assembly, homodimer. It depends on Mn(2+) as a cofactor.

The protein localises to the golgi apparatus membrane. It catalyses the reaction an N(4)-{beta-D-GlcNAc-(1-&gt;2)-alpha-D-Man-(1-&gt;3)-[alpha-D-Man-(1-&gt;6)]-beta-D-Man-(1-&gt;4)-beta-D-GlcNAc-(1-&gt;4)-beta-D-GlcNAc}-L-asparaginyl-[protein] + UDP-N-acetyl-alpha-D-glucosamine = N(4)-{beta-D-GlcNAc-(1-&gt;2)-alpha-D-Man-(1-&gt;3)-[beta-D-GlcNAc-(1-&gt;2)-alpha-D-Man-(1-&gt;6)]-beta-D-Man-(1-&gt;4)-beta-D-GlcNAc-(1-&gt;4)-beta-D-GlcNAc}-L-asparaginyl-[protein] + UDP + H(+). The protein operates within protein modification; protein glycosylation. In terms of biological role, plays an essential role in protein N-glycosylation. Catalyzes the transfer of N-acetylglucosamine (GlcNAc) onto the free terminal mannose moiety in the core structure of the nascent N-linked glycan chain, giving rise to the second branch in complex glycans. The protein is Alpha-1,6-mannosyl-glycoprotein 2-beta-N-acetylglucosaminyltransferase (MGAT2) of Homo sapiens (Human).